The following is a 209-amino-acid chain: MKDPNTIPPWRCTDFNAWCIAVDKSTNVKNKEELLSTLTYFINYEIEMGQTYPIDIKMTRNEAEDFFFKFCTVICVPVESETSPAPDLATASIDWKTSLLGAFYIKPNYPGRCSHICNGGFLVSPSHRSKGIGRNLANAYLYFAPRIGFKSSVFNLVFATNIKSIRLWERLNFTRAGIIKDAGRLKGHEGYVDAYIYQYHFPSLEDALK.

The 177-residue stretch at 26–202 (TNVKNKEELL…DAYIYQYHFP (177 aa)) folds into the N-acetyltransferase domain. Residue N118 participates in substrate binding. CoA is bound at residue 128–133 (RSKGIG). 155-156 (NL) serves as a coordination point for substrate.

Belongs to the acetyltransferase family. As to quaternary structure, homodimer.

The protein resides in the cytoplasm. It localises to the mitochondrion. The catalysed reaction is L-glutamate 5-semialdehyde + acetyl-CoA = N-acetyl-L-glutamate 5-semialdehyde + CoA + H(+). Functionally, N-acetyltransferase involved in oxidative stress resistance. Acetylates the toxic proline metabolism intermediate (S)-1-pyrroline-5-carboxylate (P5C), or more likely its spontaneously forming tautomer glutamate-5-semialdehyde (GSA) into N-acetyl-GSA for arginine synthesis in the mitochondria. P5C has been shown to increase the levels of reactive oxygen species (ROS) in the cell by inhibiting the function of the respiratory chain in the mitochondria. The enzyme is able to reduce intracellular ROS levels under P5C-induced oxidative stress and protects cells from damage by oxidative stress. Also acetylates and thereby detoxifies the proline analog azetidine-2-carboxylate (AZC), however it is unlikely that AZC is a natural substrate as it occurs only in plants belonging to the Lilaceae family. This Schizosaccharomyces pombe (strain 972 / ATCC 24843) (Fission yeast) protein is N-acetyltransferase aca1.